We begin with the raw amino-acid sequence, 521 residues long: Bifunctional purine biosynthesis protein PurH (521 aa).

One can recognise an MGS-like domain in the interval 1–145 (MIKQALISVS…KNHRDVTVVV (145 aa)).

The protein belongs to the PurH family.

The catalysed reaction is (6R)-10-formyltetrahydrofolate + 5-amino-1-(5-phospho-beta-D-ribosyl)imidazole-4-carboxamide = 5-formamido-1-(5-phospho-D-ribosyl)imidazole-4-carboxamide + (6S)-5,6,7,8-tetrahydrofolate. It carries out the reaction IMP + H2O = 5-formamido-1-(5-phospho-D-ribosyl)imidazole-4-carboxamide. Its pathway is purine metabolism; IMP biosynthesis via de novo pathway; 5-formamido-1-(5-phospho-D-ribosyl)imidazole-4-carboxamide from 5-amino-1-(5-phospho-D-ribosyl)imidazole-4-carboxamide (10-formyl THF route): step 1/1. It participates in purine metabolism; IMP biosynthesis via de novo pathway; IMP from 5-formamido-1-(5-phospho-D-ribosyl)imidazole-4-carboxamide: step 1/1. This is Bifunctional purine biosynthesis protein PurH from Burkholderia orbicola (strain MC0-3).